Reading from the N-terminus, the 481-residue chain is Cobyric acid synthase (481 aa).

One can recognise a GATase cobBQ-type domain in the interval 247–433 (AFNVVVPLLP…LHGLFDVPDS (187 aa)). Cysteine 328 functions as the Nucleophile in the catalytic mechanism. Histidine 425 is an active-site residue.

This sequence belongs to the CobB/CobQ family. CobQ subfamily.

Its pathway is cofactor biosynthesis; adenosylcobalamin biosynthesis. Catalyzes amidations at positions B, D, E, and G on adenosylcobyrinic A,C-diamide. NH(2) groups are provided by glutamine, and one molecule of ATP is hydrogenolyzed for each amidation. The polypeptide is Cobyric acid synthase (Alcanivorax borkumensis (strain ATCC 700651 / DSM 11573 / NCIMB 13689 / SK2)).